Reading from the N-terminus, the 359-residue chain is Peptide chain release factor 1 (359 aa).

Q235 is subject to N5-methylglutamine.

Belongs to the prokaryotic/mitochondrial release factor family. Methylated by PrmC. Methylation increases the termination efficiency of RF1.

It localises to the cytoplasm. Functionally, peptide chain release factor 1 directs the termination of translation in response to the peptide chain termination codons UAG and UAA. This is Peptide chain release factor 1 from Verminephrobacter eiseniae (strain EF01-2).